The chain runs to 336 residues: 4-hydroxy-2-oxovalerate aldolase (336 aa).

The 251-residue stretch at 4 to 254 (PRLTDTTLRD…NPGLDVLALM (251 aa)) folds into the Pyruvate carboxyltransferase domain. 12–13 (RD) contributes to the substrate binding site. Asp-13 is a binding site for Mn(2+). His-16 acts as the Proton acceptor in catalysis. Substrate is bound by residues Ser-166 and His-193. Mn(2+) is bound by residues His-193 and His-195. Residue Tyr-284 participates in substrate binding.

This sequence belongs to the 4-hydroxy-2-oxovalerate aldolase family.

The enzyme catalyses (S)-4-hydroxy-2-oxopentanoate = acetaldehyde + pyruvate. This Roseiflexus castenholzii (strain DSM 13941 / HLO8) protein is 4-hydroxy-2-oxovalerate aldolase.